Consider the following 425-residue polypeptide: Sodium-dependent glucose transporter 1A (425 aa).

The next 11 helical transmembrane spans lie at 35-55 (LIFV…GVLF), 61-81 (FFLL…IPFC), 84-104 (AVLL…VDTG), 123-143 (ALHF…KLAW), 183-203 (WAYA…FGLF), 228-248 (ALLC…ITYG), 271-291 (SIFW…ATFL), 294-314 (GTMI…LVLF), 320-340 (CLWI…PSGI), 355-375 (AFFV…IGIL), and 382-402 (LPVV…LFPV).

This sequence belongs to the major facilitator superfamily.

The protein localises to the apical cell membrane. Its function is as follows. May function as a sodium-dependent glucose transporter. Potential channels for urea in the inner medulla of kidney. The chain is Sodium-dependent glucose transporter 1A from Mus musculus (Mouse).